Reading from the N-terminus, the 118-residue chain is Probable non-functional immunoglobulin lambda variable 1-50 (118 aa).

A signal peptide spans 1 to 19 (MAWSSLLLTLLAHCTGSWA). Positions 20–44 (QSVLTQPPSVSGAPGQRVTISCTGS) are framework-1. Residues 20–118 (QSVLTQPPSV…CKAWDNSLNA (99 aa)) form the Ig-like domain. Cysteines 41 and 109 form a disulfide. The tract at residues 45–53 (SSNIGAGYV) is complementarity-determining-1. The segment at 54–70 (VHWYQQLPGTAPKLLIY) is framework-2. Positions 71 to 73 (GNS) are complementarity-determining-2. The segment at 74-109 (NRPSGVPDQFSGSKSGTSASLAITGLQSEDEADYYC) is framework-3. Positions 110-118 (KAWDNSLNA) are complementarity-determining-3.

As to quaternary structure, immunoglobulins are composed of two identical heavy chains and two identical light chains; disulfide-linked.

Its subcellular location is the secreted. It is found in the cell membrane. Probable non-functional open reading frame (ORF) of V region of the variable domain of immunoglobulin light chains. Non-functional ORF generally cannot participate in the synthesis of a productive immunoglobulin chain due to altered V-(D)-J or switch recombination and/or splicing site (at mRNA level) and/or conserved amino acid change (protein level). Immunoglobulins, also known as antibodies, are membrane-bound or secreted glycoproteins produced by B lymphocytes. In the recognition phase of humoral immunity, the membrane-bound immunoglobulins serve as receptors which, upon binding of a specific antigen, trigger the clonal expansion and differentiation of B lymphocytes into immunoglobulins-secreting plasma cells. Secreted immunoglobulins mediate the effector phase of humoral immunity, which results in the elimination of bound antigens. The antigen binding site is formed by the variable domain of one heavy chain, together with that of its associated light chain. Thus, each immunoglobulin has two antigen binding sites with remarkable affinity for a particular antigen. The variable domains are assembled by a process called V-(D)-J rearrangement and can then be subjected to somatic hypermutations which, after exposure to antigen and selection, allow affinity maturation for a particular antigen. This is Probable non-functional immunoglobulin lambda variable 1-50 from Homo sapiens (Human).